Reading from the N-terminus, the 591-residue chain is Probable lysosomal cobalamin transporter (591 aa).

Transmembrane regions (helical) follow at residues 8 to 28 (LIWV…STFV), 39 to 59 (AAVT…VLLI), 95 to 115 (IVYY…IPFT), 144 to 164 (WTLG…FVPF), and 198 to 218 (FLIT…MALL). The tract at residues 238–266 (TASQLETNRERQRQLEGRNEGREGGLDSR) is disordered. Over residues 244 to 266 (TNRERQRQLEGRNEGREGGLDSR) the composition is skewed to basic and acidic residues. The next 4 helical transmembrane spans lie at 315–335 (LIGG…MLIT), 378–398 (VLFL…IATA), 422–442 (MATV…AMVV), and 509–529 (FFGI…LIVF).

It belongs to the LIMR family. LMBRD1 subfamily.

The protein resides in the lysosome membrane. Probable lysosomal cobalamin transporter. Required to export cobalamin from lysosomes allowing its conversion to cofactors. The protein is Probable lysosomal cobalamin transporter of Pyrenophora tritici-repentis (strain Pt-1C-BFP) (Wheat tan spot fungus).